The primary structure comprises 466 residues: ATP synthase subunit beta (466 aa).

155 to 162 (GGAGVGKT) is a binding site for ATP.

Belongs to the ATPase alpha/beta chains family. F-type ATPases have 2 components, CF(1) - the catalytic core - and CF(0) - the membrane proton channel. CF(1) has five subunits: alpha(3), beta(3), gamma(1), delta(1), epsilon(1). CF(0) has three main subunits: a(1), b(2) and c(9-12). The alpha and beta chains form an alternating ring which encloses part of the gamma chain. CF(1) is attached to CF(0) by a central stalk formed by the gamma and epsilon chains, while a peripheral stalk is formed by the delta and b chains.

It localises to the cell inner membrane. The catalysed reaction is ATP + H2O + 4 H(+)(in) = ADP + phosphate + 5 H(+)(out). Produces ATP from ADP in the presence of a proton gradient across the membrane. The catalytic sites are hosted primarily by the beta subunits. The sequence is that of ATP synthase subunit beta from Azoarcus sp. (strain BH72).